Reading from the N-terminus, the 295-residue chain is Diaminopimelate epimerase (295 aa).

Asparagine 13 and asparagine 69 together coordinate substrate. Cysteine 78 functions as the Proton donor in the catalytic mechanism. Residues 79–80 (GN), asparagine 173, asparagine 212, and 230–231 (ER) contribute to the substrate site. Cysteine 239 acts as the Proton acceptor in catalysis. 240–241 (GT) contacts substrate.

The protein belongs to the diaminopimelate epimerase family. In terms of assembly, homodimer.

The protein localises to the cytoplasm. The catalysed reaction is (2S,6S)-2,6-diaminopimelate = meso-2,6-diaminopimelate. It participates in amino-acid biosynthesis; L-lysine biosynthesis via DAP pathway; DL-2,6-diaminopimelate from LL-2,6-diaminopimelate: step 1/1. Functionally, catalyzes the stereoinversion of LL-2,6-diaminopimelate (L,L-DAP) to meso-diaminopimelate (meso-DAP), a precursor of L-lysine. The chain is Diaminopimelate epimerase from Methanococcus aeolicus (strain ATCC BAA-1280 / DSM 17508 / OCM 812 / Nankai-3).